The primary structure comprises 219 residues: MSNQKALVIFSGGQDSTTCLIQAIQIYGRENVQAITFQYGQRHAVELERARWIAQDLGVKQTVLDLSLMRQITHNALMDDTAAIETAENGVPNTFVDGRNALFLLYAAIYAKGQGIRHIIAGVCETDFSGYPDCRDVFVKSMNVTLNLAMDYDFQIHTPLMYLTKAQTWALADEMGVLDYIREQTHTCYNGIVGGCRECPSCILRERGLAEYLESKKAV.

Residue 10-20 (FSGGQDSTTCL) coordinates ATP. Zn(2+)-binding residues include C188, C196, C199, and C202.

This sequence belongs to the QueC family. The cofactor is Zn(2+).

The enzyme catalyses 7-carboxy-7-deazaguanine + NH4(+) + ATP = 7-cyano-7-deazaguanine + ADP + phosphate + H2O + H(+). It functions in the pathway purine metabolism; 7-cyano-7-deazaguanine biosynthesis. Catalyzes the ATP-dependent conversion of 7-carboxy-7-deazaguanine (CDG) to 7-cyano-7-deazaguanine (preQ(0)). The polypeptide is 7-cyano-7-deazaguanine synthase (Neisseria meningitidis serogroup C / serotype 2a (strain ATCC 700532 / DSM 15464 / FAM18)).